We begin with the raw amino-acid sequence, 432 residues long: Glutamyl-tRNA reductase (432 aa).

Residues 49-52 (TCNR), Ser107, 112-114 (ETQ), and Gln118 each bind substrate. Residue Cys50 is the Nucleophile of the active site. Position 186 to 191 (186 to 191 (GAGEMG)) interacts with NADP(+).

It belongs to the glutamyl-tRNA reductase family. In terms of assembly, homodimer.

The catalysed reaction is (S)-4-amino-5-oxopentanoate + tRNA(Glu) + NADP(+) = L-glutamyl-tRNA(Glu) + NADPH + H(+). It functions in the pathway porphyrin-containing compound metabolism; protoporphyrin-IX biosynthesis; 5-aminolevulinate from L-glutamyl-tRNA(Glu): step 1/2. Its function is as follows. Catalyzes the NADPH-dependent reduction of glutamyl-tRNA(Glu) to glutamate 1-semialdehyde (GSA). This chain is Glutamyl-tRNA reductase, found in Campylobacter jejuni subsp. jejuni serotype O:6 (strain 81116 / NCTC 11828).